Here is a 392-residue protein sequence, read N- to C-terminus: Formate-dependent phosphoribosylglycinamide formyltransferase (392 aa).

Residues 22-23 and Glu82 contribute to the N(1)-(5-phospho-beta-D-ribosyl)glycinamide site; that span reads EL. ATP-binding positions include Arg114, Lys155, 160–165, 195–198, and Glu203; these read SSGKGQ and EGVV. Residues 119 to 308 form the ATP-grasp domain; the sequence is RLAAEELQLP…EFALHVRAFL (190 aa). Glu267 and Glu279 together coordinate Mg(2+). N(1)-(5-phospho-beta-D-ribosyl)glycinamide-binding positions include Asp286, Lys355, and 362–363; that span reads RR.

This sequence belongs to the PurK/PurT family. Homodimer.

The enzyme catalyses N(1)-(5-phospho-beta-D-ribosyl)glycinamide + formate + ATP = N(2)-formyl-N(1)-(5-phospho-beta-D-ribosyl)glycinamide + ADP + phosphate + H(+). It participates in purine metabolism; IMP biosynthesis via de novo pathway; N(2)-formyl-N(1)-(5-phospho-D-ribosyl)glycinamide from N(1)-(5-phospho-D-ribosyl)glycinamide (formate route): step 1/1. Involved in the de novo purine biosynthesis. Catalyzes the transfer of formate to 5-phospho-ribosyl-glycinamide (GAR), producing 5-phospho-ribosyl-N-formylglycinamide (FGAR). Formate is provided by PurU via hydrolysis of 10-formyl-tetrahydrofolate. This is Formate-dependent phosphoribosylglycinamide formyltransferase from Shigella boydii serotype 18 (strain CDC 3083-94 / BS512).